The following is a 201-amino-acid chain: UPF0301 protein Smed_0532 (201 aa).

It belongs to the UPF0301 (AlgH) family.

This is UPF0301 protein Smed_0532 from Sinorhizobium medicae (strain WSM419) (Ensifer medicae).